We begin with the raw amino-acid sequence, 1121 residues long: MLRRFSSTFKKKGDRESKQNGTASSSSAAVANTNNNDNKRHSKISAARKSSSDDDRNEKKGNSVSPFEKYASVLHASRSPIPNQTGDGAYLEHEHTTSLLQDARHLGFKDFKTLKEVIESKLPGGQLIDDKTMLMERIIQLVSRLPHNSKHREELTNAFLTELWDSLPHPPLSYMGNDYAYRSADGSNNNPTLPRLGAANTLYARTIPPLIIQPGGLPDPGLVFDTLFARQTFKPHPNKVSSVFFYWASLIIHDIFQTDYKNPNMNKTSGYLDLSILYGDVQEEQNLIRTFKDGKLKPDSFSEPRLQAFPATCCVLMVMLNRFHNYAVEQLAAINENGRFTKPADNLSEEEAKKAWAKYDEDLFQTGRLITCGLYINITLYDYLRTIVNLNRTNSTWCLDPRAQMEGSHTAPSGLGNQCSVEFNLAYRWHSATSATDEKWTEDVYERLMGKPASEVSMTELLMGLGKYQAELPKDPSKRTFADLERQADGRFKDEDLVNLLVNAVEDVAGSFGARNVPKVLKNVEILGIIQSRKWNVGSLNEFRKFFGLKPYETFEEINSDPDVAESLRSLYDHPDFVELYPGIVAEEAKQPMVPGVGIAPTYTISRAVLSDAVALVRGDRFYTIDYNPRNLTNWGYSEVRYDLSINQGCIFYKLATRAFPNWFKPDSIYAHYPMTIPSENRKIMKDLGREIHYSWDRPQYTPPRVDLVSYSNAKLVAEQQNQFRAAWGDTVEFVFGKASKEFKLYQDSAFIQKHADVMSKLLNKEEWHRSVKEFYEDITAKLLEDKTRRFGGINQVDITNDVGNLTPVIFAANVFSLPLKSKENPRGIYTEHEMFKVLAALYNCLYFDIDKTKSYPLHHASQAVGEPLGKALEANVKALGGSSLLSGIFRSFRENKNALKEYGVHLTKQLLENGLGAHEIAWAQFLPTVIAMVPAQAQAFTQIVDFYLSKEGSKHLPAIQRLAKQDTKKSDEQLLHYCLEAVRLNDMSGLYRQSETTLAVTDEAVEVTIQPGDKVFVSFAKANRDASVFPDPAEVRLDRPMNSYINPTLGPHGFLSKETSHIALTAMLRAVGRLNNLRVAPGVQGQLKKIPQPGGYSAYLREDHGSYSIFPTTFRVQYDA.

The disordered stretch occupies residues 1 to 66 (MLRRFSSTFK…NEKKGNSVSP (66 aa)). Positions 22–36 (TASSSSAAVANTNNN) are enriched in low complexity. Residues 50–61 (SSSDDDRNEKKG) are compositionally biased toward basic and acidic residues. H253 serves as the catalytic Proton acceptor. Residues D254, S269, Y271, D273, and S275 each coordinate Ca(2+).

The protein belongs to the peroxidase family.

It carries out the reaction (9Z,12Z)-octadecadienoate + O2 = (8E,10R,12Z)-10-hydroperoxyoctadeca-8,12-dienoate. Responsible for the synthesis of various fatty acid-derived oxylipins. Oxidizes linoleic acid primarily to 10R-hydroperoxy-8,12-octadecadienoic acid (10R-HPODE) and, to a lesser extent, 8R-hydroperoxylinoleic acid (8R-HPODE). Also synthesizes 10-hydroxy-octadeca-8,12-dienoic acid (10-HODE) from linoleic acid and primarily 8R-hydroxy-octadeca-9-monoenoic acid (8-HOME, also known as psiB beta) from oleic acid. 8-HOME forms part of psi factor, a mixture of oxylipins that regulates the balance between sexual and asexual spore production. Displays epoxyalcohol synthase activity. Plays a role in the synthesis of prostaglandins which may be required for pathogenicity. The protein is Linoleate 10R-lipoxygenase of Aspergillus fumigatus (strain ATCC MYA-4609 / CBS 101355 / FGSC A1100 / Af293) (Neosartorya fumigata).